The sequence spans 524 residues: Keratin, type II cytoskeletal 72 (524 aa).

The segment at 1–136 (MSRQLNLYPG…DPEIQKVRAQ (136 aa)) is head. A coil 1A region spans residues 137–172 (EREQIKALNNKFASFIDKVRFLEQQNQVLGTKWELL). Residues 137–450 (EREQIKALNN…KLLEGEECRM (314 aa)) enclose the IF rod domain. A linker 1 region spans residues 173–191 (QQLDLNNCKNNLEPILEGY). The segment at 192–283 (TSNLRKQLEM…CLYEGEIAQL (92 aa)) is coil 1B. Residues 284–307 (QSHISDTSVILSMDNNRDLDLDSI) form a linker 12 region. The interval 308–446 (IAQVRAQYEE…ATYRKLLEGE (139 aa)) is coil 2. The tract at residues 447–524 (ECRMSGEYPN…SSCATKKASR (78 aa)) is tail. Residues 495 to 524 (KTKGSCGGSELKDAPAKTSGSSCATKKASR) form a disordered region.

Belongs to the intermediate filament family. As to quaternary structure, heterotetramer of two type I and two type II keratins.

Functionally, has a role in hair formation. Specific component of keratin intermediate filaments in the inner root sheath (IRS) of the hair follicle. This Bos taurus (Bovine) protein is Keratin, type II cytoskeletal 72 (KRT72).